An 88-amino-acid polypeptide reads, in one-letter code: Insulin-related peptide 4 (88 aa).

The first 19 residues, 1–19 (MKLTLIILLVVAYSWCSEA), serve as a signal peptide directing secretion. Positions 20–45 (QNEARVFCGRVLSERLAALCWGPNSV) are excised as a propeptide. Arg65 bears the Arginine amide mark. A propeptide spanning residues 69-88 (GLATECCDKACTVEELLSYC) is cleaved from the precursor.

Belongs to the insulin family. In terms of tissue distribution, DAGWWLTRGAARSLGGVR-amide: Expressed in corpora cardiaca (CC), corpora allata (CA), antennal lobe (AL) and gnathal ganglion (GNG) (at protein level). Expression in CC and CA detected in most animals, in AL and GNG in few animals (at protein level).

The protein localises to the secreted. The sequence is that of Insulin-related peptide 4 from Agrotis ipsilon (Black cutworm moth).